Here is a 291-residue protein sequence, read N- to C-terminus: Lipoyl synthase (291 aa).

[4Fe-4S] cluster-binding residues include C35, C40, C46, C61, C65, C68, and S273. The 216-residue stretch at 47 to 262 folds into the Radical SAM core domain; that stretch reads FGKRQATFLI…KERALTMGFE (216 aa).

Belongs to the radical SAM superfamily. Lipoyl synthase family. The cofactor is [4Fe-4S] cluster.

It localises to the cytoplasm. The enzyme catalyses [[Fe-S] cluster scaffold protein carrying a second [4Fe-4S](2+) cluster] + N(6)-octanoyl-L-lysyl-[protein] + 2 oxidized [2Fe-2S]-[ferredoxin] + 2 S-adenosyl-L-methionine + 4 H(+) = [[Fe-S] cluster scaffold protein] + N(6)-[(R)-dihydrolipoyl]-L-lysyl-[protein] + 4 Fe(3+) + 2 hydrogen sulfide + 2 5'-deoxyadenosine + 2 L-methionine + 2 reduced [2Fe-2S]-[ferredoxin]. It functions in the pathway protein modification; protein lipoylation via endogenous pathway; protein N(6)-(lipoyl)lysine from octanoyl-[acyl-carrier-protein]: step 2/2. Its function is as follows. Catalyzes the radical-mediated insertion of two sulfur atoms into the C-6 and C-8 positions of the octanoyl moiety bound to the lipoyl domains of lipoate-dependent enzymes, thereby converting the octanoylated domains into lipoylated derivatives. This chain is Lipoyl synthase, found in Citrifermentans bemidjiense (strain ATCC BAA-1014 / DSM 16622 / JCM 12645 / Bem) (Geobacter bemidjiensis).